The primary structure comprises 114 residues: Tyrosine-protein phosphatase 11 (114 aa).

The Tyrosine-protein phosphatase domain maps to Trp-1 to Val-114. Asp-81 is a binding site for substrate.

This sequence belongs to the protein-tyrosine phosphatase family.

The enzyme catalyses O-phospho-L-tyrosyl-[protein] + H2O = L-tyrosyl-[protein] + phosphate. This is Tyrosine-protein phosphatase 11 (STY-11) from Styela plicata (Wrinkled sea squirt).